A 563-amino-acid polypeptide reads, in one-letter code: Arginine--tRNA ligase (563 aa).

The 'HIGH' region signature appears at 121 to 131 (PNIAKPFSIGH).

This sequence belongs to the class-I aminoacyl-tRNA synthetase family. In terms of assembly, monomer.

It localises to the cytoplasm. It carries out the reaction tRNA(Arg) + L-arginine + ATP = L-arginyl-tRNA(Arg) + AMP + diphosphate. The protein is Arginine--tRNA ligase of Streptococcus mutans serotype c (strain ATCC 700610 / UA159).